A 435-amino-acid chain; its full sequence is Histidinol dehydrogenase (435 aa).

Residues tyrosine 131, glutamine 189, and asparagine 212 each contribute to the NAD(+) site. Residues serine 238, glutamine 260, and histidine 263 each coordinate substrate. Zn(2+) contacts are provided by glutamine 260 and histidine 263. Residues glutamate 327 and histidine 328 each act as proton acceptor in the active site. Substrate contacts are provided by histidine 328, aspartate 361, glutamate 415, and histidine 420. A Zn(2+)-binding site is contributed by aspartate 361. Histidine 420 provides a ligand contact to Zn(2+).

The protein belongs to the histidinol dehydrogenase family. As to quaternary structure, homodimer. Zn(2+) is required as a cofactor.

The catalysed reaction is L-histidinol + 2 NAD(+) + H2O = L-histidine + 2 NADH + 3 H(+). Its pathway is amino-acid biosynthesis; L-histidine biosynthesis; L-histidine from 5-phospho-alpha-D-ribose 1-diphosphate: step 9/9. In terms of biological role, catalyzes the sequential NAD-dependent oxidations of L-histidinol to L-histidinaldehyde and then to L-histidine. In Buchnera aphidicola subsp. Schizaphis graminum (strain Sg), this protein is Histidinol dehydrogenase (hisD).